Consider the following 474-residue polypeptide: GTPase Der (474 aa).

2 EngA-type G domains span residues Phe-3 to Arg-167 and Leu-204 to Asn-379. GTP is bound by residues Gly-9–Ser-16, Asp-56–Leu-60, Asn-119–Glu-122, Gly-210–Ser-217, Asp-257–Met-261, and Asn-322–Asp-325. One can recognise a KH-like domain in the interval Lys-380–Glu-464.

This sequence belongs to the TRAFAC class TrmE-Era-EngA-EngB-Septin-like GTPase superfamily. EngA (Der) GTPase family. As to quaternary structure, associates with the 50S ribosomal subunit.

Functionally, GTPase that plays an essential role in the late steps of ribosome biogenesis. In Allorhizobium ampelinum (strain ATCC BAA-846 / DSM 112012 / S4) (Agrobacterium vitis (strain S4)), this protein is GTPase Der.